The chain runs to 637 residues: Transcription termination factor FttA (637 aa).

Residues 4-71 (EDVLLDLKHK…IAMRPDPRVL (68 aa)) are KHa. Positions 72-139 (ATPEDSISII…WIPKVVRTPP (68 aa)) are KHb. A metallo-beta-lactamase N-terminus region spans residues 180–383 (WVRVTALGGC…VISEATYGNA (204 aa)). Zn(2+) contacts are provided by His-242, His-244, Asp-246, His-247, His-329, and Asp-352. The interval 384–578 (NAFQPALKDA…MEVQVVDGFS (195 aa)) is beta-Casp. The segment at 579 to 637 (GHSDRRQLMEYVKRMQPRPERVFTEHGDEKACVDLASSVYKKLKIETRALTNLETVRLL) is metallo-beta-lactamase C-terminus. His-604 contacts Zn(2+).

Belongs to the metallo-beta-lactamase superfamily. RNA-metabolizing metallo-beta-lactamase-like family. FttA subfamily. In terms of assembly, homodimer. Interacts with RNA polymerase (RNAP), interacts with the Spt4-Spt5 complex. Requires Zn(2+) as cofactor.

Functionally, terminates transcription on the whole genome. Termination is linked to FttA-mediated RNA cleavage and does not require NTP hydrolysis. Cleaves endonucleolytically at the RNA exit channel of RNA polymerase (RNAP); the 5'-3' exonuclease activity of this protein degrades the nascent RNA released from RNAP. This chain is Transcription termination factor FttA, found in Methanosarcina mazei (strain ATCC BAA-159 / DSM 3647 / Goe1 / Go1 / JCM 11833 / OCM 88) (Methanosarcina frisia).